Reading from the N-terminus, the 553-residue chain is Chaperonin GroEL (553 aa).

Residues 30–33, Lys-51, 87–91, Gly-415, and Asp-495 each bind ATP; these read TLGP and DGTTT.

It belongs to the chaperonin (HSP60) family. Forms a cylinder of 14 subunits composed of two heptameric rings stacked back-to-back. Interacts with the co-chaperonin GroES.

Its subcellular location is the cytoplasm. The enzyme catalyses ATP + H2O + a folded polypeptide = ADP + phosphate + an unfolded polypeptide.. Functionally, together with its co-chaperonin GroES, plays an essential role in assisting protein folding. The GroEL-GroES system forms a nano-cage that allows encapsulation of the non-native substrate proteins and provides a physical environment optimized to promote and accelerate protein folding. The chain is Chaperonin GroEL from Buchnera aphidicola subsp. Tuberolachnus salignus.